The primary structure comprises 86 residues: MSIDTQKVIEDNKRSSADTGSPEVQVALLTARIELLTGHFKTHKKDHHSRRGLLQMVNRRRSLLDYLKKKDVERYKALIEKLGLRR.

The tract at residues 1–22 (MSIDTQKVIEDNKRSSADTGSP) is disordered. Positions 7–16 (KVIEDNKRSS) are enriched in basic and acidic residues.

Belongs to the universal ribosomal protein uS15 family. Part of the 30S ribosomal subunit. Forms a bridge to the 50S subunit in the 70S ribosome, contacting the 23S rRNA.

Its function is as follows. One of the primary rRNA binding proteins, it binds directly to 16S rRNA where it helps nucleate assembly of the platform of the 30S subunit by binding and bridging several RNA helices of the 16S rRNA. In terms of biological role, forms an intersubunit bridge (bridge B4) with the 23S rRNA of the 50S subunit in the ribosome. In Stenotrophomonas maltophilia (strain R551-3), this protein is Small ribosomal subunit protein uS15.